We begin with the raw amino-acid sequence, 154 residues long: MAKAVAVLRGDSKVSGVVNFEQSSESDPTTITWEISGNDANALRGFHVHTFGDNTNGCTSAGPHFNPFTKEHGAPEDDNRHVGDLGNVTTDTSGVAKGSKQDLFVKLIGQNSILGRTVVIHAGTDDLGKGGNAESKKTGNAGARPACGVIGLSE.

The Cu cation site is built by H47, H49, and H64. A disulfide bridge links C58 with C147. H64, H72, H81, and D84 together coordinate Zn(2+). A Cu cation-binding site is contributed by H121. R144 serves as a coordination point for substrate.

Belongs to the Cu-Zn superoxide dismutase family. In terms of assembly, homodimer. It depends on Cu cation as a cofactor. The cofactor is Zn(2+).

It localises to the cytoplasm. The enzyme catalyses 2 superoxide + 2 H(+) = H2O2 + O2. Functionally, destroys radicals which are normally produced within the cells and which are toxic to biological systems. This is Superoxide dismutase [Cu-Zn] 1 (SOD1) from Debaryomyces hansenii (strain ATCC 36239 / CBS 767 / BCRC 21394 / JCM 1990 / NBRC 0083 / IGC 2968) (Yeast).